The following is a 351-amino-acid chain: Ribosomal RNA large subunit methyltransferase M (351 aa).

S-adenosyl-L-methionine is bound by residues serine 183, 216–219 (APGG), aspartate 235, aspartate 255, and aspartate 271. Residue lysine 300 is the Proton acceptor of the active site.

This sequence belongs to the class I-like SAM-binding methyltransferase superfamily. RNA methyltransferase RlmE family. RlmM subfamily. As to quaternary structure, monomer.

Its subcellular location is the cytoplasm. It carries out the reaction cytidine(2498) in 23S rRNA + S-adenosyl-L-methionine = 2'-O-methylcytidine(2498) in 23S rRNA + S-adenosyl-L-homocysteine + H(+). Catalyzes the 2'-O-methylation at nucleotide C2498 in 23S rRNA. This Ectopseudomonas mendocina (strain ymp) (Pseudomonas mendocina) protein is Ribosomal RNA large subunit methyltransferase M.